The sequence spans 338 residues: Putative ankyrin repeat protein CBU_0781 (338 aa).

Residues 1–31 (MSRRETPTSTISSTPTGTRTPRRRLSRKGHP) form a disordered region. Residues 7-19 (PTSTISSTPTGTR) are compositionally biased toward low complexity. Basic residues predominate over residues 20–31 (TPRRRLSRKGHP). 2 ANK repeats span residues 92–124 (QGDTLLIKAAKKGKFLIAKALLEAGAYKEIVNK) and 125–157 (LGETALICAVRHFRVETLDLLIQYHADVKIKYK). The stretch at 197–242 (SQIMASDKEIDEIIRNARNLQIIKKEKREAEERARTKKSKQITLQR) forms a coiled coil. Residues 319–338 (KKEDTTLSRNNSLSCLSSPR) form a disordered region. Residues 325–338 (LSRNNSLSCLSSPR) are compositionally biased toward low complexity.

This chain is Putative ankyrin repeat protein CBU_0781, found in Coxiella burnetii (strain RSA 493 / Nine Mile phase I).